Consider the following 227-residue polypeptide: DNA repair protein RecO (227 aa).

Belongs to the RecO family.

In terms of biological role, involved in DNA repair and RecF pathway recombination. This chain is DNA repair protein RecO, found in Pseudomonas syringae pv. syringae (strain B728a).